The chain runs to 214 residues: Adenylate kinase (214 aa).

ATP is bound at residue 10 to 15 (GTGKGT). The tract at residues 30 to 59 (STGDILRENIQKKNTIGKKIHNILKNGELV) is NMP. AMP contacts are provided by residues threonine 31, arginine 36, 57–59 (ELV), 85–88 (GFPR), and glutamine 92. The LID stretch occupies residues 122-159 (GRRVHTPSGRIYNINYNPPREEGKDDLTQEKLTIREDD). ATP-binding positions include arginine 123 and 132 to 133 (IY). Residues arginine 156 and arginine 167 each contribute to the AMP site. An ATP-binding site is contributed by glutamine 200.

It belongs to the adenylate kinase family. In terms of assembly, monomer.

The protein resides in the cytoplasm. It carries out the reaction AMP + ATP = 2 ADP. Its pathway is purine metabolism; AMP biosynthesis via salvage pathway; AMP from ADP: step 1/1. Catalyzes the reversible transfer of the terminal phosphate group between ATP and AMP. Plays an important role in cellular energy homeostasis and in adenine nucleotide metabolism. The chain is Adenylate kinase from Buchnera aphidicola subsp. Schizaphis graminum (strain Sg).